Here is a 118-residue protein sequence, read N- to C-terminus: Secreted RxLR effector protein 143 (118 aa).

The N-terminal stretch at 1 to 18 (MRHCAFLFRLFLIGYSCS) is a signal peptide. Basic and acidic residues predominate over residues 35–65 (DELPRAEQWDSDGKRILQADDPEHIPTEERG). The interval 35–66 (DELPRAEQWDSDGKRILQADDPEHIPTEERGI) is disordered. Residues 49–64 (RILQADDPEHIPTEER) carry the RxLR-dEER motif.

This sequence belongs to the RxLR effector family.

The protein localises to the secreted. The protein resides in the host cell membrane. Functionally, secreted effector that completely suppresses the host cell death induced by cell death-inducing proteins. The sequence is that of Secreted RxLR effector protein 143 from Plasmopara viticola (Downy mildew of grapevine).